A 306-amino-acid polypeptide reads, in one-letter code: Curved DNA-binding protein (306 aa).

The J domain maps to aspartate 5–tryptophan 69.

The protein localises to the cytoplasm. Its subcellular location is the nucleoid. DNA-binding protein that preferentially recognizes a curved DNA sequence. It is probably a functional analog of DnaJ; displays overlapping activities with DnaJ, but functions under different conditions, probably acting as a molecular chaperone in an adaptive response to environmental stresses other than heat shock. Lacks autonomous chaperone activity; binds native substrates and targets them for recognition by DnaK. Its activity is inhibited by the binding of CbpM. The chain is Curved DNA-binding protein from Escherichia coli O8 (strain IAI1).